The following is a 621-amino-acid chain: ATP-dependent lipid A-core flippase (621 aa).

Helical transmembrane passes span 32–52, 91–111, 192–212, 286–306, and 312–332; these read IVAA…LAAF, VWGT…LVVI, IVLL…FPLL, SPFS…IALW, and YTTI…YAPI. The ABC transmembrane type-1 domain maps to 33 to 344; that stretch reads VAALIAIFGV…LANISIPMQT (312 aa). The 234-residue stretch at 378-611 folds into the ABC transporter domain; that stretch reads FRNVDVEYRS…NGYYTMLRNI (234 aa). 410 to 417 is an ATP binding site; that stretch reads GRSGSGKS.

This sequence belongs to the ABC transporter superfamily. Lipid exporter (TC 3.A.1.106) family. Homodimer.

The protein resides in the cell inner membrane. The enzyme catalyses ATP + H2O + lipid A-core oligosaccharideSide 1 = ADP + phosphate + lipid A-core oligosaccharideSide 2.. Its function is as follows. Involved in lipopolysaccharide (LPS) biosynthesis. Translocates lipid A-core from the inner to the outer leaflet of the inner membrane. Transmembrane domains (TMD) form a pore in the inner membrane and the ATP-binding domain (NBD) is responsible for energy generation. The polypeptide is ATP-dependent lipid A-core flippase (Neisseria meningitidis serogroup B (strain ATCC BAA-335 / MC58)).